A 135-amino-acid chain; its full sequence is Small ribosomal subunit protein bS16m (135 aa).

Residues 1-34 (MVQLTTIFCKAYHGGHLTIRLALGGCTNRPFYRI) constitute a mitochondrion transit peptide.

The protein belongs to the bacterial ribosomal protein bS16 family. Component of the mitochondrial ribosome small subunit (28S) which comprises a 12S rRNA and about 30 distinct proteins.

It localises to the mitochondrion. This is Small ribosomal subunit protein bS16m (Mrps16) from Mus musculus (Mouse).